Here is an 801-residue protein sequence, read N- to C-terminus: MGSKIVEKKRKSRDSDSESDNELGDGLFDGVLSQSEDEEDYIPSSEVDEDDDDDADESASEDSDDSNDSEDDEVEEDDEALLSDEIPSEGESEKDQDLAESKESKQDQDKEPSEPEILEPFVDPPRKEDEELEDRNYRIEKDANGGIRYVYDEIDPVYDSDDTDYNVPVNTIGNIPLSFYDSYPHIGYDINGKKIMRPATGDALQNLLDSIEVPEGWTGLTDPNTGKPLNLSRDELELIRKVQQGLIPDDVEDPYPDTVEWFTSVEEKMPLSAAPEPKRRFIPSKNEAKQIMKLVRAIREGRILPYKPPEEREREELEKEEEFYDLWQNEEPQPPNPMHIPAPKLPPPGYDLSYNPPPEYLPTKEEREEWEKMDPEDREKDYLPTKYDSLRKVPAWGNFVKERFERCMDLYLAPRVRKNRLNIDPNSLLPKLPSPDELKPFPTVQQTIFRGHEGRVRSVAIDPTGVALATGGDDGTVRVWELLTGRQVWSVKLNGDEAVNTVRWRPTKDTFILAAAAGEDIFLMIPTHPSVTPALDQASRDILNAGFGHATNGKQQANLPPGKEPPGKWARPGTRLEDEGVLLRITVRSTIKAISWHRRGDHFATVSPSGQRSSVAIHTLSKHLTQIPFRKLNGLAQTASFHPLRPLFFVATQRSIRCYDLQKLELVKIVQPGAKWISSFDVHPGGDNLVVGSYDKRLLWHDLDLSNRPYKTMRFHTEAIRAVRFHKGGLPLFADASDDGSLQIFHGKVPNDQLENPTIVPVKMLKGHKVVNKLGVLDIDWHPREPWCVSAGADGTARLWM.

Disordered regions lie at residues 1 to 135 (MGSK…LEDR) and 358 to 377 (PEYL…DPED). Acidic residues predominate over residues 35-90 (SEDEEDYIPSSEVDEDDDDDADESASEDSDDSNDSEDDEVEEDDEALLSDEIPSEG). Composition is skewed to basic and acidic residues over residues 91 to 113 (ESEK…KEPS), 124 to 135 (PPRKEDEELEDR), and 362 to 377 (PTKE…DPED). WD repeat units follow at residues 451–490 (GHEG…QVWS) and 494–534 (NGDE…VTPA). The segment at 546 to 570 (GFGHATNGKQQANLPPGKEPPGKWA) is disordered. WD repeat units follow at residues 586–628 (TVRS…TQIP), 631–669 (KLNG…LVKI), 672–711 (PGAK…RPYK), 715–755 (FHTE…DQLE), and 771–801 (VNKL…RLWM).

Belongs to the WD repeat BOP1/ERB1 family. In terms of assembly, component of the NOP7 complex, composed of ERB1, NOP7 and YTM1. The complex is held together by ERB1, which interacts with NOP7 via its N-terminal domain and with YTM1 via a high-affinity interaction between the seven-bladed beta-propeller domains of the 2 proteins. The NOP7 complex associates with the 66S pre-ribosome.

Its subcellular location is the nucleus. It localises to the nucleolus. The protein localises to the nucleoplasm. In terms of biological role, component of the NOP7 complex, which is required for maturation of the 25S and 5.8S ribosomal RNAs and formation of the 60S ribosome. This Chaetomium thermophilum (strain DSM 1495 / CBS 144.50 / IMI 039719) (Thermochaetoides thermophila) protein is Ribosome biogenesis protein ERB1.